A 498-amino-acid chain; its full sequence is Ammonium transporter 1 member 1 (498 aa).

A run of 11 helical transmembrane segments spans residues 39–59 (LLFS…LCAG), 74–94 (VLDA…FAFG), 120–140 (FFLF…GSIA), 148–168 (YLIY…HWIW), 192–212 (FAGS…GALI), 236–256 (LVVL…PGSF), 274–296 (SGVG…TTLF), 307–327 (VVDV…GCSV), 331–351 (WAAI…NALA), 360–380 (LEAA…TALF), and 411–431 (VIQI…LFYG).

Belongs to the ammonia transporter channel (TC 1.A.11.2) family. In terms of tissue distribution, expressed in roots and shoots.

It is found in the membrane. In terms of biological role, ammonium transporter probably involved in ammonium uptake from the soil. This Oryza sativa subsp. japonica (Rice) protein is Ammonium transporter 1 member 1 (AMT1-1).